The sequence spans 448 residues: uncharacterized protein (448 aa).

The residue at position 280 (K280) is an N6-(pyridoxal phosphate)lysine.

The protein belongs to the class-III pyridoxal-phosphate-dependent aminotransferase family.

The protein resides in the cytoplasm. It localises to the mitochondrion. This is an uncharacterized protein from Schizosaccharomyces pombe (strain 972 / ATCC 24843) (Fission yeast).